Here is a 280-residue protein sequence, read N- to C-terminus: MAVTAALVKELRERTGAGMMECKKALVETNGDIELAIENMRKSGAAKAAKKAGNIAAEGTIMIKEGEGIAALVEVNCQTDFVAKDSNFVAFANQVTDAALASKASVEELQAQFEEARVALVAKIGENINIRRVQYVEGEALATYRHGDRIGVVVAGSADVETLKHVAMHVAASRPEFLTPDDVPAEVVAKEREVQVGIAMNEGKSKEIAEKMVEGRMKKFTGEVSLTGQPFVMEPKKTVGEILAEKGATVSAFIRLEVGEGIEKQEGLSFAEEVALAQKG.

The involved in Mg(2+) ion dislocation from EF-Tu stretch occupies residues Thr79–Val82.

The protein belongs to the EF-Ts family.

It localises to the cytoplasm. Associates with the EF-Tu.GDP complex and induces the exchange of GDP to GTP. It remains bound to the aminoacyl-tRNA.EF-Tu.GTP complex up to the GTP hydrolysis stage on the ribosome. This is Elongation factor Ts from Vibrio cholerae serotype O1 (strain ATCC 39541 / Classical Ogawa 395 / O395).